The following is a 503-amino-acid chain: 4-trimethylaminobutyraldehyde dehydrogenase (503 aa).

Residues lysine 189 and 241-245 (GSVPT) each bind NAD(+). The active-site Proton acceptor is glutamate 263. Residue cysteine 297 is the Nucleophile of the active site. NAD(+) is bound at residue glutamate 400.

Belongs to the aldehyde dehydrogenase family. Homotetramer.

The protein resides in the cytoplasm. The protein localises to the cytosol. The enzyme catalyses 4-(trimethylamino)butanal + NAD(+) + H2O = 4-(trimethylamino)butanoate + NADH + 2 H(+). It carries out the reaction an aldehyde + NAD(+) + H2O = a carboxylate + NADH + 2 H(+). The protein operates within amine and polyamine biosynthesis; carnitine biosynthesis. Converts gamma-trimethylaminobutyraldehyde into gamma-butyrobetaine with high efficiency (in vitro). Can catalyze the irreversible oxidation of a broad range of aldehydes to the corresponding acids in an NAD-dependent reaction, but with low efficiency. The sequence is that of 4-trimethylaminobutyraldehyde dehydrogenase (aldh9A1) from Gadus morhua subsp. callarias (Baltic cod).